The following is a 405-amino-acid chain: Arginine biosynthesis bifunctional protein ArgJ, mitochondrial (405 aa).

Residues T174, K200, T211, and E300 each coordinate substrate. Catalysis depends on T211, which acts as the Nucleophile.

The protein belongs to the ArgJ family. As to quaternary structure, heterodimer of an alpha and a beta chain. The alpha and beta chains are autoproteolytically processed from a single precursor protein within the mitochondrion.

The protein localises to the mitochondrion matrix. It catalyses the reaction N(2)-acetyl-L-ornithine + L-glutamate = N-acetyl-L-glutamate + L-ornithine. It carries out the reaction L-glutamate + acetyl-CoA = N-acetyl-L-glutamate + CoA + H(+). Its pathway is amino-acid biosynthesis; L-arginine biosynthesis; L-ornithine and N-acetyl-L-glutamate from L-glutamate and N(2)-acetyl-L-ornithine (cyclic): step 1/1. It functions in the pathway amino-acid biosynthesis; L-arginine biosynthesis; N(2)-acetyl-L-ornithine from L-glutamate: step 1/4. Its function is as follows. Catalyzes two activities which are involved in the cyclic version of arginine biosynthesis: the synthesis of acetylglutamate from glutamate and acetyl-CoA, and of ornithine by transacetylation between acetylornithine and glutamate. The polypeptide is Arginine biosynthesis bifunctional protein ArgJ, mitochondrial (Candida tropicalis (strain ATCC MYA-3404 / T1) (Yeast)).